The primary structure comprises 197 residues: Transmembrane 4 L6 family member 5 (197 aa).

The Cytoplasmic segment spans residues 1 to 9; that stretch reads MCTGKCARC. Residues 10 to 30 form a helical membrane-spanning segment; it reads VGLSLITLCLVCIVANALLLV. Topologically, residues 31-46 are extracellular; sequence PNGETSWTNTNHLSLQ. Residues 47–67 form a helical membrane-spanning segment; the sequence is VWLMGGFIGGGLMVLCPGIAA. Residues 68–90 lie on the Cytoplasmic side of the membrane; that stretch reads VRAGGKGCCGAGCCGNRCRMLRS. The chain crosses the membrane as a helical span at residues 91–111; the sequence is VFSSAFGVLGAIYCLSVSGAG. The segment at 91–197 is interaction with MTOR and CASTOR1; sequence VFSSAFGVLG…DCRKKQDTPH (107 aa). At 112 to 157 the chain is on the extracellular side; it reads LRNGPRCLMNGEWGYHFEDTAGAYLLNRTLWDRCEAPPRVVPWNVT. L-arginine is bound at residue 124–129; that stretch reads WGYHFE. 2 N-linked (GlcNAc...) asparagine glycosylation sites follow: N138 and N155. A helical transmembrane segment spans residues 158-178; the sequence is LFSLLVAASCLEIVLCGIQLV. The Cytoplasmic segment spans residues 179–197; the sequence is NATIGVFCGDCRKKQDTPH.

This sequence belongs to the L6 tetraspanin family. As to quaternary structure, interacts with MTOR; the interaction is positively regulated by arginine and is negatively regulated by leucine. Interacts with SLC38A9. Interacts with SLC7A1; the interaction is negatively regulated by arginine. Interacts with CASTOR1; the interaction is positively regulated by leucine and is negatively regulated by arginine. As to expression, intestine. Overexpressed in pancreatic cancers.

Its subcellular location is the lysosome membrane. The protein localises to the cell membrane. Functionally, acts as a lysosomal membrane arginine sensor. Forms a complex with MTOR and SLC38A9 on lysosomal membranes in an arginine-regulated manner, leading to arginine efflux which enables the activation of mTORC1 which subsequently leads to RPS6KB1 and EIF4EBP1 phosphorylations. Facilitates cell cycle G1/S phase progression and the translocation of the CDK4-CCND1 complex into the nucleus. CDKN1B and RHOA/ROCK signaling activity are involved in TM4SF5-mediated acceleration of G1/S phase progression. This chain is Transmembrane 4 L6 family member 5 (TM4SF5), found in Homo sapiens (Human).